The sequence spans 152 residues: UPF0178 protein KPK_4355 (152 aa).

This sequence belongs to the UPF0178 family.

The chain is UPF0178 protein KPK_4355 from Klebsiella pneumoniae (strain 342).